The following is a 299-amino-acid chain: Heterodisulfide reductase subunit B-like protein (299 aa).

This sequence belongs to the HdrB family. The heterodisulfide reductase is composed of three subunits; HdlA, HdlB and HdlC. It forms a complex with the F420-non-reducing hydrogenase (Mvh), which provides the reducing equivalents to the heterodisulfide reductase.

It localises to the cytoplasm. Functionally, has oxidoreductase activity. The Hdl and Mvh subunits may together mediate electron transfer from hydrogen to an unidentified electron acceptor on the cytoplasmic side of the membrane. This is Heterodisulfide reductase subunit B-like protein (hdlB) from Archaeoglobus profundus (strain DSM 5631 / JCM 9629 / NBRC 100127 / Av18).